Reading from the N-terminus, the 240-residue chain is UDP-2,3-diacylglucosamine hydrolase (240 aa).

Aspartate 8, histidine 10, aspartate 41, asparagine 79, and histidine 114 together coordinate Mn(2+). Residue 79-80 (NR) coordinates substrate. Substrate contacts are provided by aspartate 122, serine 160, asparagine 164, lysine 167, and histidine 195. Residues histidine 195 and histidine 197 each coordinate Mn(2+).

Belongs to the LpxH family. Mn(2+) is required as a cofactor.

It localises to the cell inner membrane. It catalyses the reaction UDP-2-N,3-O-bis[(3R)-3-hydroxytetradecanoyl]-alpha-D-glucosamine + H2O = 2-N,3-O-bis[(3R)-3-hydroxytetradecanoyl]-alpha-D-glucosaminyl 1-phosphate + UMP + 2 H(+). Its pathway is glycolipid biosynthesis; lipid IV(A) biosynthesis; lipid IV(A) from (3R)-3-hydroxytetradecanoyl-[acyl-carrier-protein] and UDP-N-acetyl-alpha-D-glucosamine: step 4/6. In terms of biological role, hydrolyzes the pyrophosphate bond of UDP-2,3-diacylglucosamine to yield 2,3-diacylglucosamine 1-phosphate (lipid X) and UMP by catalyzing the attack of water at the alpha-P atom. Involved in the biosynthesis of lipid A, a phosphorylated glycolipid that anchors the lipopolysaccharide to the outer membrane of the cell. This is UDP-2,3-diacylglucosamine hydrolase from Cellvibrio japonicus (strain Ueda107) (Pseudomonas fluorescens subsp. cellulosa).